Consider the following 381-residue polypeptide: MRCLVVLLAALALSQASGITRIPLHKGKTLRKALKERGLLEDFLQRQQYAVSSKYSSLGKVAREPLTSYLDSQYFGKIYIGTPPQEFTVVFDTGSSDLWVPSIYCKSNVCKNHHRFDPRKSSTFRNLGKPLSIHYGTGSMEGFLGYDTVTVSNIVDPNQTVGLSTEQPGEVFTYSEFDGILGLAYPSLASEYSVPVFDNMMDRHLVARDLFSVYMDRNGQGSMLTLGAIDPSYYTGSLHWVPVTLQQYWQFTVDSVTINGVAVACVGGCQAILDTGTSVLFGPSSDILKIQMAIGATENRYGEFDVNCGNLRSMPTVVFEINGRDYPLSPSAYTSKDQGFCTSGFQGDNNSELWILGDVFIREYYSVFDRANNRVGLAKAI.

The first 16 residues, 1 to 16 (MRCLVVLLAALALSQA), serve as a signal peptide directing secretion. A propeptide spans 17-58 (SGITRIPLHKGKTLRKALKERGLLEDFLQRQQYAVSSKYSSL) (activation peptide). Residues 74-378 (YFGKIYIGTP…DRANNRVGLA (305 aa)) enclose the Peptidase A1 domain. The active site involves Asp92. The cysteines at positions 105 and 110 are disulfide-linked. A glycan (N-linked (GlcNAc...) asparagine) is linked at Asn158. Cys265 and Cys269 are oxidised to a cystine. Asp274 is a catalytic residue. Cys308 and Cys341 are oxidised to a cystine. N-linked (GlcNAc...) asparagine glycosylation occurs at Asn349.

This sequence belongs to the peptidase A1 family.

It catalyses the reaction Broad specificity similar to that of pepsin A. Clots milk by cleavage of a single 104-Ser-Phe-|-Met-Ala-107 bond in kappa-chain of casein.. Functionally, chymosin is synthesized in the mucosa of the abomasum (fourth stomach) of young (unweaned) ruminants. The enzyme hydrolyzes casein to paracasein. This chain is Chymosin, found in Camelus dromedarius (Dromedary).